The sequence spans 475 residues: Aspartyl/glutamyl-tRNA(Asn/Gln) amidotransferase subunit B (475 aa).

Belongs to the GatB/GatE family. GatB subfamily. In terms of assembly, heterotrimer of A, B and C subunits.

It catalyses the reaction L-glutamyl-tRNA(Gln) + L-glutamine + ATP + H2O = L-glutaminyl-tRNA(Gln) + L-glutamate + ADP + phosphate + H(+). The catalysed reaction is L-aspartyl-tRNA(Asn) + L-glutamine + ATP + H2O = L-asparaginyl-tRNA(Asn) + L-glutamate + ADP + phosphate + 2 H(+). Functionally, allows the formation of correctly charged Asn-tRNA(Asn) or Gln-tRNA(Gln) through the transamidation of misacylated Asp-tRNA(Asn) or Glu-tRNA(Gln) in organisms which lack either or both of asparaginyl-tRNA or glutaminyl-tRNA synthetases. The reaction takes place in the presence of glutamine and ATP through an activated phospho-Asp-tRNA(Asn) or phospho-Glu-tRNA(Gln). This chain is Aspartyl/glutamyl-tRNA(Asn/Gln) amidotransferase subunit B, found in Mycoplasma mobile (strain ATCC 43663 / 163K / NCTC 11711) (Mesomycoplasma mobile).